The chain runs to 712 residues: Cadherin-13 (712 aa).

The signal sequence occupies residues 1–22; sequence MQHKTQLTLSFLLSQVLLLACA. The propeptide occupies 23–138; it reads EDLECTPGFQ…GNLGIPRQKR (116 aa). N86 is a glycosylation site (N-linked (GlcNAc...) asparagine). 5 consecutive Cadherin domains span residues 143 to 245, 246 to 363, 364 to 477, 478 to 585, and 586 to 680; these read TPIL…RPMF, KEGP…PPEF, TKKE…GPVF, HPNP…VPSL, and YPTL…LQVC. N-linked (GlcNAc...) asparagine glycosylation is found at N382, N500, N530, N638, and N671. Residue D693 is the site of GPI-anchor amidated aspartate attachment. The propeptide at 694–712 is removed in mature form; that stretch reads ALHISMTLILLSLFSLFCL.

As to quaternary structure, by contrast to classical cadherins, homodimerization in trans is not mediated by cadherin EC1 domain strand-swapping, but instead through a homophilic adhesive interface which joins two elongated EC1-EC2 domains through a region near their Ca2+-binding sites to form a tetrahedral, X-like shape. In terms of tissue distribution, neural tissues. Also found in muscles; kidney and retina.

The protein resides in the cell membrane. It is found in the cytoplasm. Functionally, cadherins are calcium-dependent cell adhesion proteins. They preferentially interact with themselves in a homophilic manner in connecting cells; cadherins may thus contribute to the sorting of heterogeneous cell types. May act as a negative regulator of neural cell growth. The sequence is that of Cadherin-13 (CDH13) from Gallus gallus (Chicken).